Here is a 333-residue protein sequence, read N- to C-terminus: DNA-directed RNA polymerase subunit alpha (333 aa).

The segment at Met1 to Lys234 is alpha N-terminal domain (alpha-NTD). Residues Ile248 to Ala333 form an alpha C-terminal domain (alpha-CTD) region.

The protein belongs to the RNA polymerase alpha chain family. As to quaternary structure, homodimer. The RNAP catalytic core consists of 2 alpha, 1 beta, 1 beta' and 1 omega subunit. When a sigma factor is associated with the core the holoenzyme is formed, which can initiate transcription.

The enzyme catalyses RNA(n) + a ribonucleoside 5'-triphosphate = RNA(n+1) + diphosphate. In terms of biological role, DNA-dependent RNA polymerase catalyzes the transcription of DNA into RNA using the four ribonucleoside triphosphates as substrates. In Pseudomonas fluorescens (strain Pf0-1), this protein is DNA-directed RNA polymerase subunit alpha.